The chain runs to 146 residues: 3-dehydroquinate dehydratase (146 aa).

Tyr-22 (proton acceptor) is an active-site residue. Substrate contacts are provided by Asn-73, His-79, and Asp-86. The Proton donor role is filled by His-99. Substrate contacts are provided by residues 100–101 (LS) and Arg-110.

This sequence belongs to the type-II 3-dehydroquinase family. In terms of assembly, homododecamer.

It carries out the reaction 3-dehydroquinate = 3-dehydroshikimate + H2O. It functions in the pathway metabolic intermediate biosynthesis; chorismate biosynthesis; chorismate from D-erythrose 4-phosphate and phosphoenolpyruvate: step 3/7. Functionally, catalyzes a trans-dehydration via an enolate intermediate. The polypeptide is 3-dehydroquinate dehydratase (Synechococcus sp. (strain CC9902)).